The following is a 293-amino-acid chain: Elongation factor Ts (293 aa).

Positions 80-83 are involved in Mg(2+) ion dislocation from EF-Tu; the sequence is TDFV.

The protein belongs to the EF-Ts family.

It localises to the cytoplasm. In terms of biological role, associates with the EF-Tu.GDP complex and induces the exchange of GDP to GTP. It remains bound to the aminoacyl-tRNA.EF-Tu.GTP complex up to the GTP hydrolysis stage on the ribosome. In Lacticaseibacillus casei (strain BL23) (Lactobacillus casei), this protein is Elongation factor Ts.